The primary structure comprises 212 residues: Lysozyme g-like protein 2 (212 aa).

Residues methionine 1 to glycine 19 form the signal peptide. 2 disulfide bridges follow: cysteine 39-cysteine 92 and cysteine 53-cysteine 61. Glutamate 105 is an active-site residue.

Belongs to the glycosyl hydrolase 23 family. In terms of tissue distribution, strong expression detected in the eye and weak expression in the testis. No expression is observed in any other tissues.

It is found in the secreted. In terms of biological role, may act as a potent antibacterial protein that may play a role in the innate immunity. In Homo sapiens (Human), this protein is Lysozyme g-like protein 2 (LYG2).